Reading from the N-terminus, the 364-residue chain is Aminomethyltransferase (364 aa).

It belongs to the GcvT family. The glycine cleavage system is composed of four proteins: P, T, L and H.

The catalysed reaction is N(6)-[(R)-S(8)-aminomethyldihydrolipoyl]-L-lysyl-[protein] + (6S)-5,6,7,8-tetrahydrofolate = N(6)-[(R)-dihydrolipoyl]-L-lysyl-[protein] + (6R)-5,10-methylene-5,6,7,8-tetrahydrofolate + NH4(+). Functionally, the glycine cleavage system catalyzes the degradation of glycine. This chain is Aminomethyltransferase, found in Shigella dysenteriae serotype 1 (strain Sd197).